Here is a 186-residue protein sequence, read N- to C-terminus: Adenylate kinase (186 aa).

12–17 (GAGKGT) is an ATP binding site. The tract at residues 32-61 (STGDLLRAEVNAQSPLGKEAALIMNKGELV) is NMP. AMP is bound by residues T33, R38, 59 to 61 (ELV), 86 to 89 (GFPR), and Q93. Positions 127–133 (SRGRSDD) are LID. Position 128 (R128) interacts with ATP. Residues R130 and R141 each coordinate AMP. G169 provides a ligand contact to ATP.

Belongs to the adenylate kinase family. Monomer.

Its subcellular location is the cytoplasm. It catalyses the reaction AMP + ATP = 2 ADP. Its pathway is purine metabolism; AMP biosynthesis via salvage pathway; AMP from ADP: step 1/1. In terms of biological role, catalyzes the reversible transfer of the terminal phosphate group between ATP and AMP. Plays an important role in cellular energy homeostasis and in adenine nucleotide metabolism. This is Adenylate kinase from Prochlorococcus marinus (strain MIT 9211).